Here is a 160-residue protein sequence, read N- to C-terminus: Putative 4-hydroxy-4-methyl-2-oxoglutarate aldolase (160 aa).

Residues 75 to 78 (GDQL) and R97 contribute to the substrate site. D98 serves as a coordination point for a divalent metal cation.

This sequence belongs to the class II aldolase/RraA-like family. As to quaternary structure, homotrimer. The cofactor is a divalent metal cation.

It carries out the reaction 4-hydroxy-4-methyl-2-oxoglutarate = 2 pyruvate. The catalysed reaction is oxaloacetate + H(+) = pyruvate + CO2. Catalyzes the aldol cleavage of 4-hydroxy-4-methyl-2-oxoglutarate (HMG) into 2 molecules of pyruvate. Also contains a secondary oxaloacetate (OAA) decarboxylase activity due to the common pyruvate enolate transition state formed following C-C bond cleavage in the retro-aldol and decarboxylation reactions. The protein is Putative 4-hydroxy-4-methyl-2-oxoglutarate aldolase of Vibrio parahaemolyticus serotype O3:K6 (strain RIMD 2210633).